Reading from the N-terminus, the 233-residue chain is MSNLNNLRHKLQNGLIASCQPVPGSAMDTPEIVAAMACAALAGGAVGLRIEGINNIRAVRRATDAPIIGIIKRDLPDSEVRITPWLEDIDALSAAGADIIAFDVTCRERPVSVADLYQRARATGCLTMADASNIDDGLLAHHLGIDFIGTTLSGYTQATVPTEPDLALVTQLAQAGCRVIAEGRYHSPALAAAAISAGAYAVTVGSAITRIEHICGWFCDAIKQCETEKLTEY.

This sequence belongs to the NanE family.

The enzyme catalyses an N-acyl-D-glucosamine 6-phosphate = an N-acyl-D-mannosamine 6-phosphate. It participates in amino-sugar metabolism; N-acetylneuraminate degradation; D-fructose 6-phosphate from N-acetylneuraminate: step 3/5. Converts N-acetylmannosamine-6-phosphate (ManNAc-6-P) to N-acetylglucosamine-6-phosphate (GlcNAc-6-P). The protein is Putative N-acetylmannosamine-6-phosphate 2-epimerase of Yersinia pseudotuberculosis serotype O:3 (strain YPIII).